A 189-amino-acid chain; its full sequence is Glucose-6-phosphate isomerase (189 aa).

The Fe cation site is built by histidine 88, histidine 90, glutamate 97, and histidine 136.

Belongs to the archaeal-type GPI family. Homodimer.

The protein resides in the cytoplasm. The catalysed reaction is alpha-D-glucose 6-phosphate = beta-D-fructose 6-phosphate. The protein operates within carbohydrate degradation; glycolysis; D-glyceraldehyde 3-phosphate and glycerone phosphate from D-glucose: step 2/4. The chain is Glucose-6-phosphate isomerase from Thermococcus kodakarensis (strain ATCC BAA-918 / JCM 12380 / KOD1) (Pyrococcus kodakaraensis (strain KOD1)).